The chain runs to 298 residues: ADP/ATP translocase 2 (298 aa).

Residue M1 is modified to N-acetylmethionine. Residues 1 to 7 lie on the Mitochondrial intermembrane side of the membrane; it reads MTDAAVS. An N-acetylthreonine; in ADP/ATP translocase 2, N-terminally processed modification is found at T2. The Solcar 1 repeat unit spans residues 6-98; the sequence is VSFAKDFLAG…FAFKDKYKQI (93 aa). Phosphoserine is present on S7. A helical membrane pass occupies residues 8–37; that stretch reads FAKDFLAGGVAAAISKTAVAPIERVKLLLQ. K23 carries the N6-malonyllysine modification. The Mitochondrial matrix portion of the chain corresponds to 38 to 74; it reads VQHASKQITADKQYKGIIDCVVRIPKEQGVLSFWRGN. Residue K43 is modified to N6-succinyllysine. K52 is subject to N6,N6,N6-trimethyllysine; alternate. At K52 the chain carries N6,N6-dimethyllysine; alternate. K52 bears the N6-methyllysine; alternate mark. Residues 75–99 form a helical membrane-spanning segment; that stretch reads LANVIRYFPTQALNFAFKDKYKQIF. The ADP site is built by R80 and K92. 2 positions are modified to N6-malonyllysine: K92 and K96. The Mitochondrial intermembrane portion of the chain corresponds to 100 to 109; it reads LGGVDKRTQF. K105 bears the N6-acetyllysine; alternate mark. K105 is subject to N6-succinyllysine; alternate. The chain crosses the membrane as a helical span at residues 110 to 130; that stretch reads WRYFAGNLASGGAAGATSLCF. Solcar repeat units follow at residues 111–201 and 212–297; these read RYFA…AKGM and ISWM…IKKY. Residues 131–178 are Mitochondrial matrix-facing; the sequence is VYPLDFARTRLAADVGKAGAEREFKGLGDCLVKIYKSDGIKGLYQGFN. Residue K147 is modified to N6-methyllysine; alternate. Residues K147 and K155 each carry the N6-acetyllysine; alternate modification. Residues K147 and K155 each carry the N6-succinyllysine; alternate modification. An N6-malonyllysine; alternate modification is found at K147. N6-acetyllysine is present on residues K163 and K166. Residues 179-199 traverse the membrane as a helical segment; the sequence is VSVQGIIIYRAAYFGIYDTAK. The Mitochondrial intermembrane segment spans residues 200-210; sequence GMLPDPKNTHI. The helical transmembrane segment at 211–231 threads the bilayer; it reads FISWMIAQSVTAVAGLTSYPF. The Mitochondrial matrix segment spans residues 232–273; sequence DTVRRRMMMQSGRKGTDIMYTGTLDCWRKIARDEGGKAFFKG. R235 is an ADP binding site. The tract at residues 235–240 is important for transport activity; it reads RRRMMM. The short motif at 235–240 is the Nucleotide carrier signature motif element; it reads RRRMMM. Residue K268 is modified to N6-acetyllysine; alternate. K268 is modified (N6-succinyllysine; alternate). A helical transmembrane segment spans residues 274 to 291; sequence AWSNVLRGMGGAFVLVLY. Residues 292–298 lie on the Mitochondrial intermembrane side of the membrane; the sequence is DEIKKYT.

Belongs to the mitochondrial carrier (TC 2.A.29) family. In terms of assembly, monomer. Component of the MMXD complex, which includes CIAO1, ERCC2, CIAO2B, MMS19 and SLC25A5/ANT2. Interacts with AK4. Interacts with TIMM44; leading to inhibit the presequence translocase TIMM23, thereby promoting stabilization of PINK1. Trimethylated by ANTKMT at Lys-52. Present in kidney, brain, heart, liver and skeletal muscle.

Its subcellular location is the mitochondrion inner membrane. It localises to the membrane. It carries out the reaction ADP(in) + ATP(out) = ADP(out) + ATP(in). The enzyme catalyses H(+)(in) = H(+)(out). The matrix-open state (m-state) is inhibited by the membrane-permeable bongkrekic acid (BKA). The cytoplasmic-open state (c-state) is inhibited by the membrane-impermeable toxic inhibitor carboxyatractyloside (CATR). Proton transporter activity is inhibited by ADP:ATP antiporter activity. In terms of biological role, ADP:ATP antiporter that mediates import of ADP into the mitochondrial matrix for ATP synthesis, and export of ATP out to fuel the cell. Cycles between the cytoplasmic-open state (c-state) and the matrix-open state (m-state): operates by the alternating access mechanism with a single substrate-binding site intermittently exposed to either the cytosolic (c-state) or matrix (m-state) side of the inner mitochondrial membrane. In addition to its ADP:ATP antiporter activity, also involved in mitochondrial uncoupling and mitochondrial permeability transition pore (mPTP) activity. Plays a role in mitochondrial uncoupling by acting as a proton transporter: proton transport uncouples the proton flows via the electron transport chain and ATP synthase to reduce the efficiency of ATP production and cause mitochondrial thermogenesis. Proton transporter activity is inhibited by ADP:ATP antiporter activity, suggesting that SLC25A5/ANT2 acts as a master regulator of mitochondrial energy output by maintaining a delicate balance between ATP production (ADP:ATP antiporter activity) and thermogenesis (proton transporter activity). Proton transporter activity requires free fatty acids as cofactor, but does not transport it. Probably mediates mitochondrial uncoupling in tissues that do not express UCP1. Also plays a key role in mPTP opening, a non-specific pore that enables free passage of the mitochondrial membranes to solutes of up to 1.5 kDa, and which contributes to cell death. It is however unclear if SLC25A5/ANT2 constitutes a pore-forming component of mPTP or regulates it. Acts as a regulator of mitophagy independently of ADP:ATP antiporter activity: promotes mitophagy via interaction with TIMM44, leading to inhibit the presequence translocase TIMM23, thereby promoting stabilization of PINK1. As part of the mitotic spindle-associated MMXD complex it may play a role in chromosome segregation. In Rattus norvegicus (Rat), this protein is ADP/ATP translocase 2.